We begin with the raw amino-acid sequence, 198 residues long: Na(+)-translocating NADH-quinone reductase subunit E (198 aa).

6 helical membrane-spanning segments follow: residues 11-31, 39-59, 77-97, 110-130, 140-160, and 176-196; these read SIFI…FLAV, FGLG…NNLV, FLNF…LEMI, GIFL…SFMV, VVYG…LAGI, and LGIT…FSGV.

It belongs to the NqrDE/RnfAE family. As to quaternary structure, composed of six subunits; NqrA, NqrB, NqrC, NqrD, NqrE and NqrF.

The protein resides in the cell inner membrane. The enzyme catalyses a ubiquinone + n Na(+)(in) + NADH + H(+) = a ubiquinol + n Na(+)(out) + NAD(+). Its function is as follows. NQR complex catalyzes the reduction of ubiquinone-1 to ubiquinol by two successive reactions, coupled with the transport of Na(+) ions from the cytoplasm to the periplasm. NqrA to NqrE are probably involved in the second step, the conversion of ubisemiquinone to ubiquinol. In Vibrio vulnificus (strain CMCP6), this protein is Na(+)-translocating NADH-quinone reductase subunit E.